The sequence spans 505 residues: Keratin, type II cuticular Hb1 (505 aa).

The segment at 1-106 is head; that stretch reads MTCGSGFGGR…PNAQCVKQEE (106 aa). The IF rod domain maps to 106–417; sequence EKEQIKSLNS…RLLEGEEQRL (312 aa). Residues 107 to 141 form a coil 1A region; that stretch reads KEQIKSLNSRFAAFIDKVRFLEQQNKLLETKLQFY. The segment at 142 to 151 is linker 1; it reads QNRECCQSNL. The tract at residues 152 to 252 is coil 1B; that stretch reads EPLFEGYIET…YEEEILILQS (101 aa). Residue lysine 212 forms a Glycyl lysine isopeptide (Lys-Gly) (interchain with G-Cter in SUMO1) linkage. The segment at 253–269 is linker 12; sequence HISDTSVVVKLDNSRDL. Residues 270-413 form a coil 2 region; sequence NMDCIIAEIK…ATYRRLLEGE (144 aa). The tract at residues 414–505 is tail; sequence EQRLCEGIGA…GSCGSSCRKC (92 aa).

The protein belongs to the intermediate filament family. Heterotetramer of two type I and two type II keratins. In terms of tissue distribution, abundantly expressed in the differentiating cortex of growing (anagen) hair. Expression is restricted to the keratinocytes of the hair cortex and is absent from inner root sheath and medulla. Expressed in malignant lymph node tissue in breast carcinoma tissue.

This Homo sapiens (Human) protein is Keratin, type II cuticular Hb1 (KRT81).